We begin with the raw amino-acid sequence, 203 residues long: Thymidylate kinase (203 aa).

7–14 (GGEGAGKT) lines the ATP pocket.

The protein belongs to the thymidylate kinase family.

The enzyme catalyses dTMP + ATP = dTDP + ADP. Phosphorylation of dTMP to form dTDP in both de novo and salvage pathways of dTTP synthesis. This is Thymidylate kinase from Chlamydia trachomatis serovar L2 (strain ATCC VR-902B / DSM 19102 / 434/Bu).